Here is a 423-residue protein sequence, read N- to C-terminus: Gamma-glutamyl phosphate reductase (423 aa).

Positions 1–14 (MTLQAAPRSAAAQQ) are enriched in low complexity. A disordered region spans residues 1–25 (MTLQAAPRSAAAQQREPDLRQEVHD). Residues 15–25 (REPDLRQEVHD) show a composition bias toward basic and acidic residues.

It belongs to the gamma-glutamyl phosphate reductase family.

It localises to the cytoplasm. The catalysed reaction is L-glutamate 5-semialdehyde + phosphate + NADP(+) = L-glutamyl 5-phosphate + NADPH + H(+). The protein operates within amino-acid biosynthesis; L-proline biosynthesis; L-glutamate 5-semialdehyde from L-glutamate: step 2/2. Its function is as follows. Catalyzes the NADPH-dependent reduction of L-glutamate 5-phosphate into L-glutamate 5-semialdehyde and phosphate. The product spontaneously undergoes cyclization to form 1-pyrroline-5-carboxylate. In Mycobacterium ulcerans (strain Agy99), this protein is Gamma-glutamyl phosphate reductase.